A 73-amino-acid polypeptide reads, in one-letter code: Putative membrane protein insertion efficiency factor (73 aa).

It belongs to the UPF0161 family.

Its subcellular location is the cell inner membrane. Functionally, could be involved in insertion of integral membrane proteins into the membrane. This Phocaeicola vulgatus (strain ATCC 8482 / DSM 1447 / JCM 5826 / CCUG 4940 / NBRC 14291 / NCTC 11154) (Bacteroides vulgatus) protein is Putative membrane protein insertion efficiency factor.